Here is a 334-residue protein sequence, read N- to C-terminus: Galactosylgalactosylxylosylprotein 3-beta-glucuronosyltransferase 1 (334 aa).

At 1–6 (MPKRRD) the chain is on the cytoplasmic side. The segment at 3-5 (KRR) is essential for transport from endoplasmic reticulum to Golgi apparatus and interaction with SAR1A. A helical; Signal-anchor for type II membrane protein transmembrane segment spans residues 7–27 (ILAIVLIVLPWTLLITVWHQS). At 28-334 (TLAPLLAVHK…KGFTDPSVEI (307 aa)) the chain is on the lumenal side. The disordered stretch occupies residues 37–56 (KDEGSDPRRETPPGADPREY). A UDP-alpha-D-glucuronate-binding site is contributed by 91–93 (PTY). 2 positions are modified to phosphothreonine: threonine 103 and threonine 108. Position 122 (aspartate 122) interacts with UDP-alpha-D-glucuronate. Asparagine 140 carries N-linked (GlcNAc...) asparagine glycosylation. Residues arginine 165 and arginine 170 each coordinate UDP-alpha-D-glucuronate. The N-linked (GlcNAc...) asparagine glycan is linked to asparagine 184. Residue 195-197 (DDD) coordinates UDP-alpha-D-glucuronate. Aspartate 197 lines the Mn(2+) pocket. The interval 245-254 (FDPHRPFAID) is interaction with galactose moiety of substrate glycoprotein. Glutamate 284 serves as the catalytic Proton donor/acceptor. Asparagine 303 carries N-linked (GlcNAc...) asparagine glycosylation. 311–313 (HTR) contacts UDP-alpha-D-glucuronate.

This sequence belongs to the glycosyltransferase 43 family. In terms of assembly, homodimer. Interacts with SAR1A. It depends on Mn(2+) as a cofactor. In terms of processing, the soluble form derives from the membrane form by proteolytic processing. In terms of tissue distribution, mainly expressed in the brain.

It is found in the golgi apparatus membrane. Its subcellular location is the secreted. It localises to the endoplasmic reticulum membrane. It catalyses the reaction 3-O-(beta-D-galactosyl-(1-&gt;3)-beta-D-galactosyl-(1-&gt;4)-beta-D-xylosyl)-L-seryl-[protein] + UDP-alpha-D-glucuronate = 3-O-(beta-D-GlcA-(1-&gt;3)-beta-D-Gal-(1-&gt;3)-beta-D-Gal-(1-&gt;4)-beta-D-Xyl)-L-seryl-[protein] + UDP + H(+). The protein operates within protein modification; protein glycosylation. Its function is as follows. Involved in the biosynthesis of L2/HNK-1 carbohydrate epitope on glycoproteins. Can also play a role in glycosaminoglycan biosynthesis. Substrates include asialo-orosomucoid (ASOR), asialo-fetuin, and asialo-neural cell adhesion molecule. Requires sphingomyelin for activity: stearoyl-sphingomyelin was the most effective, followed by palmitoyl-sphingomyelin and lignoceroyl-sphingomyelin. Activity was demonstrated only for sphingomyelin with a saturated fatty acid and not for that with an unsaturated fatty acid, regardless of the length of the acyl group. The sequence is that of Galactosylgalactosylxylosylprotein 3-beta-glucuronosyltransferase 1 from Homo sapiens (Human).